The sequence spans 286 residues: ATP synthase gamma chain (286 aa).

Belongs to the ATPase gamma chain family. F-type ATPases have 2 components, CF(1) - the catalytic core - and CF(0) - the membrane proton channel. CF(1) has five subunits: alpha(3), beta(3), gamma(1), delta(1), epsilon(1). CF(0) has three main subunits: a, b and c.

The protein localises to the cell inner membrane. In terms of biological role, produces ATP from ADP in the presence of a proton gradient across the membrane. The gamma chain is believed to be important in regulating ATPase activity and the flow of protons through the CF(0) complex. This is ATP synthase gamma chain from Teredinibacter turnerae (strain ATCC 39867 / T7901).